The primary structure comprises 231 residues: MRVLLIEDDSATAQTIELMLKSEGFNVYTTDLGEEGVDLGKIYDYDLILLDLNLPDMSGIDVLRTLRVAKINTPIMILSGSSEIDTKVKTFAGGADDYMTKPFHKDEMIARIHAVVRRSKGHAQSVIKTGDIVVNLDAKTVEVNGNRVHLTGKEYQMLELLSLRKGTTLTKEMFLNHLYGGMDEPELKIIDVFICKLRKKLAASAHGKHHIETVWGRGYVLRDPNEQVNAA.

The Response regulatory domain maps to 2-116 (RVLLIEDDSA…EMIARIHAVV (115 aa)). 4-aspartylphosphate is present on aspartate 51. The ompR/PhoB-type DNA-binding region spans 124-223 (QSVIKTGDIV…VWGRGYVLRD (100 aa)).

Post-translationally, phosphorylated by CckA.

Forms part of a two-component regulatory system CtrA/CckA that controls multiple events in the cell cycle, including cell division, stalk synthesis and cell cycle-specific transcription. Binds to a group of cell cycle-regulated promoters critical for DNA replication, DNA methylation, and class II flagellar biogenesis. This Caulobacter vibrioides (strain ATCC 19089 / CIP 103742 / CB 15) (Caulobacter crescentus) protein is Cell cycle transcriptional regulator CtrA (ctrA).